Here is a 59-residue protein sequence, read N- to C-terminus: UPF0339 protein CC_2965 (59 aa).

It belongs to the UPF0339 family.

The chain is UPF0339 protein CC_2965 from Caulobacter vibrioides (strain ATCC 19089 / CIP 103742 / CB 15) (Caulobacter crescentus).